We begin with the raw amino-acid sequence, 305 residues long: Lysosomal thioesterase PPT2 (305 aa).

A signal peptide spans 1–32; that stretch reads MLGLPERRLPSAEFLLLLPFLLLLLLLLPAAP. Disulfide bonds link C112–C120 and C168–C179. The active-site Nucleophile is S114. N-linked (GlcNAc...) asparagine glycosylation occurs at N193. Residues D231 and H286 contribute to the active site. C279 and C299 form a disulfide bridge.

This sequence belongs to the palmitoyl-protein thioesterase family.

It localises to the lysosome. It carries out the reaction hexadecanoyl-CoA + H2O = hexadecanoate + CoA + H(+). It catalyses the reaction S-hexadecanoyl-N-acetylcysteamine + H2O = N-acetylcysteamine + hexadecanoate + H(+). Catalyzes the cleavage of thioester bonds from S-palmitoyl-CoA or S-palmitoyl-N-acetylcysteamine (unbranched structures) but does not have activity against palmitoylcysteine or palmitoylated proteins, branched structures or bulky head groups. Conversely, hydrolyzes both long and short chain fatty acyl-CoA substrate. In Bos taurus (Bovine), this protein is Lysosomal thioesterase PPT2 (PPT2).